Here is a 382-residue protein sequence, read N- to C-terminus: Na(+)/H(+) antiporter NhaA (382 aa).

The next 10 membrane-spanning stretches (helical) occupy residues 5-25, 42-62, 88-108, 116-136, 145-165, 169-189, 261-281, 282-302, 327-347, and 353-373; these read INLL…ALAW, FGGV…FFGI, LATL…NAVI, GWGI…RLVF, FLLL…AVFY, VHPT…AAYI, IVVD…RFSS, VGTA…AGIL, TGLV…VAFV, and GAAK…VALG.

Belongs to the NhaA Na(+)/H(+) (TC 2.A.33) antiporter family.

Its subcellular location is the cell inner membrane. It carries out the reaction Na(+)(in) + 2 H(+)(out) = Na(+)(out) + 2 H(+)(in). Functionally, na(+)/H(+) antiporter that extrudes sodium in exchange for external protons. The sequence is that of Na(+)/H(+) antiporter NhaA from Geobacter metallireducens (strain ATCC 53774 / DSM 7210 / GS-15).